The primary structure comprises 71 residues: MPIIKVRENEPFDVALRRFKRSCEKAGILAEVRRRESYEKPTTERKRARASAIKRHAKKLARENARRTRLY.

Residues Y38 to Y71 form a disordered region. A compositionally biased stretch (basic residues) spans K46–K59. The segment covering L60–Y71 has biased composition (basic and acidic residues).

This sequence belongs to the bacterial ribosomal protein bS21 family.

In Hamiltonella defensa subsp. Acyrthosiphon pisum (strain 5AT), this protein is Small ribosomal subunit protein bS21.